Consider the following 223-residue polypeptide: Ribosome maturation factor RimM (223 aa).

The 82-residue stretch at 142–223 (ADEFYWVDLI…RIVVDWEADY (82 aa)) folds into the PRC barrel domain.

It belongs to the RimM family. As to quaternary structure, binds ribosomal protein uS19.

The protein localises to the cytoplasm. In terms of biological role, an accessory protein needed during the final step in the assembly of 30S ribosomal subunit, possibly for assembly of the head region. Essential for efficient processing of 16S rRNA. May be needed both before and after RbfA during the maturation of 16S rRNA. It has affinity for free ribosomal 30S subunits but not for 70S ribosomes. This is Ribosome maturation factor RimM from Burkholderia multivorans (strain ATCC 17616 / 249).